Reading from the N-terminus, the 143-residue chain is Transcriptional regulator MraZ (143 aa).

SpoVT-AbrB domains are found at residues threonine 5–glutamate 47 and alanine 76–threonine 119.

This sequence belongs to the MraZ family. In terms of assembly, forms oligomers.

The protein localises to the cytoplasm. It is found in the nucleoid. The polypeptide is Transcriptional regulator MraZ (Kineococcus radiotolerans (strain ATCC BAA-149 / DSM 14245 / SRS30216)).